A 239-amino-acid chain; its full sequence is Probable transcriptional regulatory protein EF_2866 (239 aa).

It belongs to the TACO1 family. YeeN subfamily.

It localises to the cytoplasm. The chain is Probable transcriptional regulatory protein EF_2866 from Enterococcus faecalis (strain ATCC 700802 / V583).